Consider the following 286-residue polypeptide: Diaminopimelate epimerase (286 aa).

The substrate site is built by N13 and N66. C75 functions as the Proton donor in the catalytic mechanism. Substrate is bound by residues 76-77, N165, N198, and 216-217; these read GN and ER. C225 acts as the Proton acceptor in catalysis. Residue 226–227 participates in substrate binding; sequence GT.

It belongs to the diaminopimelate epimerase family. Homodimer.

The protein localises to the cytoplasm. It carries out the reaction (2S,6S)-2,6-diaminopimelate = meso-2,6-diaminopimelate. Its pathway is amino-acid biosynthesis; L-lysine biosynthesis via DAP pathway; DL-2,6-diaminopimelate from LL-2,6-diaminopimelate: step 1/1. In terms of biological role, catalyzes the stereoinversion of LL-2,6-diaminopimelate (L,L-DAP) to meso-diaminopimelate (meso-DAP), a precursor of L-lysine and an essential component of the bacterial peptidoglycan. The protein is Diaminopimelate epimerase of Oceanobacillus iheyensis (strain DSM 14371 / CIP 107618 / JCM 11309 / KCTC 3954 / HTE831).